A 203-amino-acid polypeptide reads, in one-letter code: Ribosomal RNA large subunit methyltransferase E (203 aa).

Residues Gly-51, Trp-53, Asp-69, Asp-85, and Asp-109 each contribute to the S-adenosyl-L-methionine site. The active-site Proton acceptor is the Lys-149.

The protein belongs to the class I-like SAM-binding methyltransferase superfamily. RNA methyltransferase RlmE family.

The protein localises to the cytoplasm. It carries out the reaction uridine(2552) in 23S rRNA + S-adenosyl-L-methionine = 2'-O-methyluridine(2552) in 23S rRNA + S-adenosyl-L-homocysteine + H(+). Specifically methylates the uridine in position 2552 of 23S rRNA at the 2'-O position of the ribose in the fully assembled 50S ribosomal subunit. The chain is Ribosomal RNA large subunit methyltransferase E from Methanoculleus marisnigri (strain ATCC 35101 / DSM 1498 / JR1).